A 790-amino-acid polypeptide reads, in one-letter code: Protein SEY1 (790 aa).

Residues 1-692 (MELSEGELSH…KRSIVQHITQ (692 aa)) lie on the Cytoplasmic side of the membrane. A GB1/RHD3-type G domain is found at 55–284 (GNNYHIISVF…VSNELFKPEY (230 aa)). 65–72 (GSQSTGKS) is a GTP binding site. A helical membrane pass occupies residues 693 to 713 (IPYYIYLIILVLGWNEFMAII). Over 714–716 (RNP) the chain is Lumenal. Residues 717–737 (LFFSLSIVLGATVYVLYYLGL) traverse the membrane as a helical segment. Topologically, residues 738–790 (LRPALVVAQRTMDEVIVMAKTKLREVLIDDHEVTGRQLNKMAGSKENIELDDM) are cytoplasmic.

This sequence belongs to the TRAFAC class dynamin-like GTPase superfamily. GB1/RHD3 GTPase family. RHD3 subfamily.

It is found in the endoplasmic reticulum membrane. Functionally, cooperates with the reticulon proteins and tubule-shaping DP1 family proteins to generate and maintain the structure of the tubular endoplasmic reticulum network. Has GTPase activity, which is required for its function in ER organization. This chain is Protein SEY1, found in Candida albicans (strain WO-1) (Yeast).